Consider the following 239-residue polypeptide: Pimeloyl-[acyl-carrier protein] methyl ester esterase (239 aa).

Substrate-binding positions include W20, 77 to 78 (SM), and 138 to 142 (FISLQ). S77 functions as the Nucleophile in the catalytic mechanism. Active-site residues include D192 and H220. Residue H220 coordinates substrate.

It belongs to the AB hydrolase superfamily. Carboxylesterase BioH family. As to quaternary structure, monomer.

It localises to the cytoplasm. The catalysed reaction is 6-carboxyhexanoyl-[ACP] methyl ester + H2O = 6-carboxyhexanoyl-[ACP] + methanol + H(+). The protein operates within cofactor biosynthesis; biotin biosynthesis. Its function is as follows. The physiological role of BioH is to remove the methyl group introduced by BioC when the pimeloyl moiety is complete. It allows to synthesize pimeloyl-ACP via the fatty acid synthetic pathway through the hydrolysis of the ester bonds of pimeloyl-ACP esters. The polypeptide is Pimeloyl-[acyl-carrier protein] methyl ester esterase (Legionella pneumophila (strain Corby)).